Here is a 109-residue protein sequence, read N- to C-terminus: Fluoride-specific ion channel FluC (109 aa).

The next 3 membrane-spanning stretches (helical) occupy residues 21–41 (LTLN…GFFV), 52–72 (ILFS…YFLY), and 84–104 (IIFF…GFWI).

Belongs to the fluoride channel Fluc/FEX (TC 1.A.43) family.

The protein resides in the cell inner membrane. It catalyses the reaction fluoride(in) = fluoride(out). Functionally, fluoride-specific ion channel. Important for reducing fluoride concentration in the cell, thus reducing its toxicity. The chain is Fluoride-specific ion channel FluC from Prochlorococcus marinus (strain MIT 9301).